Consider the following 102-residue polypeptide: MAARNHGEVVLEAKKSKLKPPPMFKVILLNDDFTPMDFVVTVLQTFFSMNREQATQIMLKVHMDGAGVCGVYPNDVASTKVEQVVAFARQHQHPLQCVMEEN.

The protein belongs to the ClpS family. As to quaternary structure, binds to the N-terminal domain of the chaperone ClpA.

Functionally, involved in the modulation of the specificity of the ClpAP-mediated ATP-dependent protein degradation. This Nitrosospira multiformis (strain ATCC 25196 / NCIMB 11849 / C 71) protein is ATP-dependent Clp protease adapter protein ClpS.